The primary structure comprises 317 residues: DNA-directed RNA polymerase subunit alpha 2 (317 aa).

Residues 1–227 (MALENLLHPT…NQLRNIVDIE (227 aa)) form an alpha N-terminal domain (alpha-NTD) region. The interval 241 to 317 (INPILLKHVE…TLIENWPQDL (77 aa)) is alpha C-terminal domain (alpha-CTD).

The protein belongs to the RNA polymerase alpha chain family. In terms of assembly, homodimer. The RNAP catalytic core consists of 2 alpha, 1 beta, 1 beta' and 1 omega subunit. When a sigma factor is associated with the core the holoenzyme is formed, which can initiate transcription.

It carries out the reaction RNA(n) + a ribonucleoside 5'-triphosphate = RNA(n+1) + diphosphate. DNA-dependent RNA polymerase catalyzes the transcription of DNA into RNA using the four ribonucleoside triphosphates as substrates. The chain is DNA-directed RNA polymerase subunit alpha 2 from Francisella tularensis subsp. holarctica (strain LVS).